The sequence spans 1320 residues: MRAAVGLMLSHGAGGMEPALSRPDYEQSALHHSCLLVLLRGVGPSRARVLQRAFEKVRRVNHIRVNDSSGHPRSIWIRFVHDHPVEHNDWGDFQTHRRLLGLVTIGKFDSQIELNELCRQHESLKVRYGSTLYESRAIFFGPDEQPLETIGEVLGPPAAGGRRLQDEFTTPSNFKAQAFFYREQDSCADLESRIGDFASALFWVLESRRLERSREKADKVSLLLAPFEKRDFVGLDMESRNNRKRCVGRVMKNLADLSLQAGLVDDALSLYHNANETLRSVGDSLWVGATEEGLCAASAMLLYPQMRETETLHRNSSLQEAGTSPLKNTPEKWRASDATKKISASDATANNVDSNQPQQRVTSNSSSCSSVSSLVTTATNSSASDTPTTSSSSTSTISAAPIPGHQRNGDLPGNILKAEEISNYYRKAIINYSKYRHAATIETEAALKASRICIEQNRPLDVAMFLQNILYINLSMSEAERVKRFEVITDLYQQIGYQRKAAFFQRLAALKHVQQGSQAPDWNQSYRLMLGSFTGYRLCLDPLEVIENAAGWPALQIDLVQTLITAARRLGHSALATRHMTFLLQTQWDNMSPTEQSEMAVQLQNLSAQCEGSPVPLVLENGTVIPPANLTDLPYCIDLQVKDLPAHLRPQRIKVAKADSGPFLFTPIHFNSVDRRDKKKDKNKIAFQWVQNDLSEVTVRLRNPLPFELPVTDMRLLTNGVVFESLPQTLVLQPHVPTYVALHGTPIETGQLDLQGYSTHTLGVKSNCRLKHMRGRSFPPNYVVDVIPALPRISVKTSLPQTATFSNMNSADIVVTSASLTLYNGESSSCTITITNESATLPLEHLEFSINSNVEQELQQKIFRIDEEAIKAHLPVPPQGTIEIIVDVFAEADFVCPQPPASLHSAAAPGDYGASSLTHYSSVSTSGHASLPSRVGSPHHRRNEPQNSSFRSTISGGPPSLAALTLHPGGGGGVGPSSLGSQYNQHIEAQVRFKYSGGDALTAGYCRQCAVSFNLELLPSVQITSWDVLPAEVASQFYLVLDISNLTAQEMSLNYTDTKNILIEAKESCRVPIPVDRCSLEKVVAARAAEVAENLERELCFRTQLLSFNDALSKLCSIHIAERVKIKWLLTGTDIQGIASLRGIVLSQSMVDLTAVSPLEWAISFQDTLVQPHNEIVCTVGQRSLLSIQLANQSLQPLRNLVLSIKFYQDYLNGMENYNLETRVAISGPNRIAIPLLEKQEQKEHTCSVIFFTPGRFKASIECTSNPQKQSEQPSSLLTRSCPAEAESVGQSVMFSSSYDEQQAHVWKFIPPIEVTVVEQ.

A disordered region spans residues His-313 to Leu-411. The segment covering Arg-314–Lys-327 has biased composition (polar residues). Ser-317 is subject to Phosphoserine. Thr-329 is modified (phosphothreonine). Over residues Thr-329–Lys-340 the composition is skewed to basic and acidic residues. Over residues Ser-345 to Val-361 the composition is skewed to polar residues. Residues Thr-362–Ala-400 are compositionally biased toward low complexity. Ser-672 carries the post-translational modification Phosphoserine. A disordered region spans residues Val-923–Ile-954. Over residues Pro-945–Ile-954 the composition is skewed to polar residues.

It belongs to the NIBP family. As to quaternary structure, may be part of the multisubunit TRAPP (transport protein particle) complex.

Its subcellular location is the cytoplasm. It localises to the golgi apparatus. Functionally, cooperates with Rab11 and fwd/PI4K to mediate the flow of membrane through the Golgi, which is required to support cleavage furrow ingression, therefore promoting cytokinesis in male meiotic cells. This chain is Protein brunelleschi, found in Drosophila melanogaster (Fruit fly).